The chain runs to 91 residues: Progonadoliberin-1 (91 aa).

The N-terminal stretch at 1 to 23 (MEPIPKLLAGLLLLTLCVVGCSS) is a signal peptide. Position 24 is a pyrrolidone carboxylic acid (Gln-24). The residue at position 33 (Gly-33) is a Glycine amide.

The protein belongs to the GnRH family. Post-translationally, the precursor is cleaved by ACE, which removes the Gly-Lys-Arg peptide at the C-terminus, leading to mature hormone. The mature form of Gonadoliberin-1 is also cleaved and degraded by ACE.

Its subcellular location is the secreted. Stimulates the secretion of gonadotropins; it stimulates the secretion of both luteinizing and follicle-stimulating hormones. The sequence is that of Progonadoliberin-1 (GNRH1) from Sus scrofa (Pig).